The primary structure comprises 548 residues: Probable malate:quinone oxidoreductase (548 aa).

Belongs to the MQO family. FAD serves as cofactor.

It catalyses the reaction (S)-malate + a quinone = a quinol + oxaloacetate. Its pathway is carbohydrate metabolism; tricarboxylic acid cycle; oxaloacetate from (S)-malate (quinone route): step 1/1. The chain is Probable malate:quinone oxidoreductase from Escherichia coli O127:H6 (strain E2348/69 / EPEC).